The sequence spans 337 residues: tRNA N6-adenosine threonylcarbamoyltransferase (337 aa).

H111 and H115 together coordinate Fe cation. Residues 134–138, D167, G180, and N272 each bind substrate; that span reads LVSGG. Residue D300 participates in Fe cation binding.

The protein belongs to the KAE1 / TsaD family. The cofactor is Fe(2+).

The protein resides in the cytoplasm. It catalyses the reaction L-threonylcarbamoyladenylate + adenosine(37) in tRNA = N(6)-L-threonylcarbamoyladenosine(37) in tRNA + AMP + H(+). Its function is as follows. Required for the formation of a threonylcarbamoyl group on adenosine at position 37 (t(6)A37) in tRNAs that read codons beginning with adenine. Is involved in the transfer of the threonylcarbamoyl moiety of threonylcarbamoyl-AMP (TC-AMP) to the N6 group of A37, together with TsaE and TsaB. TsaD likely plays a direct catalytic role in this reaction. In Klebsiella pneumoniae (strain 342), this protein is tRNA N6-adenosine threonylcarbamoyltransferase.